We begin with the raw amino-acid sequence, 153 residues long: MAGFIGKEKHAVDEKGRLMIPARFRRKFPETSGSLASKKEPASLYVMKSPDSSLELYLPDVWEEMARTISALSDFHPDERLLKTLMYESLEMVELDRQGRIPLSREFLDHAGITRDVVIIGADTKMIVWEPGRLSEVLEGSSGRFAALAGRYF.

SpoVT-AbrB domains follow at residues 7–61 (KEKH…LPDV) and 90–133 (LEMV…EPGR).

This sequence belongs to the MraZ family. In terms of assembly, forms oligomers.

Its subcellular location is the cytoplasm. The protein localises to the nucleoid. The protein is Transcriptional regulator MraZ of Chlorobium luteolum (strain DSM 273 / BCRC 81028 / 2530) (Pelodictyon luteolum).